A 462-amino-acid chain; its full sequence is Asparagine--tRNA ligase (462 aa).

Belongs to the class-II aminoacyl-tRNA synthetase family. In terms of assembly, homodimer.

The protein localises to the cytoplasm. It catalyses the reaction tRNA(Asn) + L-asparagine + ATP = L-asparaginyl-tRNA(Asn) + AMP + diphosphate + H(+). This is Asparagine--tRNA ligase from Borreliella afzelii (strain PKo) (Borrelia afzelii).